The chain runs to 432 residues: Phosphomethylpyrimidine synthase (432 aa).

Residues Asn-66, Met-95, Tyr-124, His-163, 185–187 (SRG), 226–229 (DGLR), and Glu-265 contribute to the substrate site. His-269 lines the Zn(2+) pocket. A substrate-binding site is contributed by Tyr-292. His-333 contributes to the Zn(2+) binding site. Positions 409, 412, and 416 each coordinate [4Fe-4S] cluster.

It belongs to the ThiC family. It depends on [4Fe-4S] cluster as a cofactor.

The enzyme catalyses 5-amino-1-(5-phospho-beta-D-ribosyl)imidazole + S-adenosyl-L-methionine = 4-amino-2-methyl-5-(phosphooxymethyl)pyrimidine + CO + 5'-deoxyadenosine + formate + L-methionine + 3 H(+). The protein operates within cofactor biosynthesis; thiamine diphosphate biosynthesis. Functionally, catalyzes the synthesis of the hydroxymethylpyrimidine phosphate (HMP-P) moiety of thiamine from aminoimidazole ribotide (AIR) in a radical S-adenosyl-L-methionine (SAM)-dependent reaction. The chain is Phosphomethylpyrimidine synthase from Moorella thermoacetica (strain ATCC 39073 / JCM 9320).